Reading from the N-terminus, the 213-residue chain is NADH dehydrogenase [ubiquinone] iron-sulfur protein 7, mitochondrial (213 aa).

The N-terminal 31 residues, 1-31, are a transit peptide targeting the mitochondrion; sequence MALIARNAKLLTGTAPFLQRAATIHTTLPSL. The span at 30–42 shows a compositional bias: low complexity; it reads SLSQQPASSPATS. A disordered region spans residues 30–52; sequence SLSQQPASSPATSGGAQPPSMNT. Residues C88, C89, C153, and C183 each coordinate [4Fe-4S] cluster.

Belongs to the complex I 20 kDa subunit family. As to quaternary structure, complex I is composed of about 45 different subunits. This is a component of the iron-sulfur (IP) fragment of the enzyme. The cofactor is [4Fe-4S] cluster.

The protein localises to the mitochondrion. The enzyme catalyses a ubiquinone + NADH + 5 H(+)(in) = a ubiquinol + NAD(+) + 4 H(+)(out). Functionally, core subunit of the mitochondrial membrane respiratory chain NADH dehydrogenase (Complex I) that is believed to belong to the minimal assembly required for catalysis. Complex I functions in the transfer of electrons from NADH to the respiratory chain. The immediate electron acceptor for the enzyme is believed to be ubiquinone. The sequence is that of NADH dehydrogenase [ubiquinone] iron-sulfur protein 7, mitochondrial from Solanum tuberosum (Potato).